The chain runs to 82 residues: NAD(P)H-quinone oxidoreductase subunit O (82 aa).

The protein belongs to the complex I NdhO subunit family. As to quaternary structure, NDH-1 can be composed of about 15 different subunits; different subcomplexes with different compositions have been identified which probably have different functions.

It localises to the cellular thylakoid membrane. The catalysed reaction is a plastoquinone + NADH + (n+1) H(+)(in) = a plastoquinol + NAD(+) + n H(+)(out). The enzyme catalyses a plastoquinone + NADPH + (n+1) H(+)(in) = a plastoquinol + NADP(+) + n H(+)(out). Its function is as follows. NDH-1 shuttles electrons from an unknown electron donor, via FMN and iron-sulfur (Fe-S) centers, to quinones in the respiratory and/or the photosynthetic chain. The immediate electron acceptor for the enzyme in this species is believed to be plastoquinone. Couples the redox reaction to proton translocation, and thus conserves the redox energy in a proton gradient. Cyanobacterial NDH-1 also plays a role in inorganic carbon-concentration. The sequence is that of NAD(P)H-quinone oxidoreductase subunit O from Prochlorococcus marinus (strain MIT 9211).